We begin with the raw amino-acid sequence, 230 residues long: Porin OmpL (230 aa).

The N-terminal stretch at 1–20 (MKSLNTLVILTSVISTSVFA) is a signal peptide.

This sequence belongs to the oligogalacturonate-specific porin KdgM (TC 1.B.35) family. OmpL subfamily.

The protein localises to the cell outer membrane. Outer membrane channel protein that allows an efficient diffusion of low-molecular-weight solutes such as small sugars and tetraglycine. However, the specific substrate recognized by the OmpL channel is unknown. The chain is Porin OmpL (ompL) from Salmonella typhimurium (strain LT2 / SGSC1412 / ATCC 700720).